The sequence spans 434 residues: 3-phosphoshikimate 1-carboxyvinyltransferase (434 aa).

3-phosphoshikimate contacts are provided by Lys22, Ser23, and Arg27. Residue Lys22 coordinates phosphoenolpyruvate. Phosphoenolpyruvate is bound by residues Gly93 and Arg121. 6 residues coordinate 3-phosphoshikimate: Ser168, Ser169, Gln170, Ser199, Asp320, and Lys347. Position 170 (Gln170) interacts with phosphoenolpyruvate. Catalysis depends on Asp320, which acts as the Proton acceptor. The phosphoenolpyruvate site is built by Arg351, Arg394, and Lys419.

Belongs to the EPSP synthase family. As to quaternary structure, monomer.

It localises to the cytoplasm. It carries out the reaction 3-phosphoshikimate + phosphoenolpyruvate = 5-O-(1-carboxyvinyl)-3-phosphoshikimate + phosphate. It participates in metabolic intermediate biosynthesis; chorismate biosynthesis; chorismate from D-erythrose 4-phosphate and phosphoenolpyruvate: step 6/7. In terms of biological role, catalyzes the transfer of the enolpyruvyl moiety of phosphoenolpyruvate (PEP) to the 5-hydroxyl of shikimate-3-phosphate (S3P) to produce enolpyruvyl shikimate-3-phosphate and inorganic phosphate. This chain is 3-phosphoshikimate 1-carboxyvinyltransferase, found in Paraburkholderia phytofirmans (strain DSM 17436 / LMG 22146 / PsJN) (Burkholderia phytofirmans).